We begin with the raw amino-acid sequence, 296 residues long: Probable alpha-L-glutamate ligase (296 aa).

An ATP-grasp domain is found at 104 to 287; it reads LQLLARQGID…IATLMITFIE (184 aa). Residues K141, 178–179, D187, and 211–213 each bind ATP; these read EF and RSN. Residues D248, E260, and N262 each contribute to the Mg(2+) site. Residues D248, E260, and N262 each coordinate Mn(2+).

The protein belongs to the RimK family. Mg(2+) is required as a cofactor. It depends on Mn(2+) as a cofactor.

The protein is Probable alpha-L-glutamate ligase of Sodalis glossinidius (strain morsitans).